The chain runs to 192 residues: Der GTPase-activating protein YihI (192 aa).

The segment covering Met1 to Gly12 has biased composition (basic residues). 2 disordered regions span residues Met1–Lys87 and Asp145–Lys192. A compositionally biased stretch (basic and acidic residues) spans Lys13–Glu26. The segment covering Arg27–Leu36 has biased composition (basic residues). Over residues Asp145–Leu172 the composition is skewed to acidic residues. Residues Pro183–Lys192 are compositionally biased toward basic and acidic residues.

It belongs to the YihI family. As to quaternary structure, interacts with Der.

In terms of biological role, a GTPase-activating protein (GAP) that modifies Der/EngA GTPase function. May play a role in ribosome biogenesis. This Aeromonas hydrophila subsp. hydrophila (strain ATCC 7966 / DSM 30187 / BCRC 13018 / CCUG 14551 / JCM 1027 / KCTC 2358 / NCIMB 9240 / NCTC 8049) protein is Der GTPase-activating protein YihI.